Here is an 87-residue protein sequence, read N- to C-terminus: Potassium channel toxin TsTXK-beta/Cryptide TyPep-16 (87 aa).

Positions 1 to 19 (MERKLALLLILGMVTLASC) are cleaved as a signal peptide. The BetaSPN-type CS-alpha/beta domain occupies 53-87 (QFGCPAYEGYCNDHCNDIERKDGECHGFKCKCAKD). Intrachain disulfides connect cysteine 56-cysteine 77, cysteine 63-cysteine 82, and cysteine 67-cysteine 84.

It belongs to the long chain scorpion toxin family. Class 1 subfamily. In terms of tissue distribution, expressed by the venom gland.

The protein resides in the secreted. Specifically blocks voltage-gated potassium channels Kv4.2/KCND2. When measured at the peak current, the blocking effect of this toxin is about 65% and shows an IC(50)=652 nM. However, when measured at a later moment of the depolarising test pulse (500 ms), a 100% block of the current is observed with an IC(50)=313 nM. This may indicate a preference of the toxin for binding the inactivated state of the channel. The inhibition is completely reversible. In vivo, intraplantar injection into rat paw induces overt nociception (licking and lifting behaviors) and decreases the mechanical nociceptive threshold (hyperalgesia). Furthermore, the hyperalgesia is prolonged when intrathecal injections are performed. Functionally, induces discomfort and anxiety in mice, as it moderately diminishes locomotion (but has no effect on rearing behavior). Does not cause hemolysis, mast cell degranulation, LDH release, and does not have antimicrobial activity. Does not cause edema and pain. In terms of biological role, does not induce hemolytic activity, lactate dehydrogenase (LDH) release from mast cells, mast cell degranulation, and antimicrobial effects. In vivo, injection into mice causes moderate edema formation, but induces very weak or no change in nociceptive sensibility. It also reduces mice locomotion, suggesting an increase in anxiety, but causes no alteration in rearing (standing on hind limbs). The polypeptide is Potassium channel toxin TsTXK-beta/Cryptide TyPep-16 (Tityus serrulatus (Brazilian scorpion)).